A 462-amino-acid chain; its full sequence is UDP-N-acetylmuramate--L-alanine ligase (462 aa).

114-120 (GSHGKTT) provides a ligand contact to ATP.

It belongs to the MurCDEF family.

The protein resides in the cytoplasm. The catalysed reaction is UDP-N-acetyl-alpha-D-muramate + L-alanine + ATP = UDP-N-acetyl-alpha-D-muramoyl-L-alanine + ADP + phosphate + H(+). It participates in cell wall biogenesis; peptidoglycan biosynthesis. Cell wall formation. This is UDP-N-acetylmuramate--L-alanine ligase from Brachyspira hyodysenteriae (strain ATCC 49526 / WA1).